The sequence spans 3122 residues: tRNA nuclease CdiA-2 (3122 aa).

The interval 36–205 (RAGVVPAWLS…ATLTTGNPNF (170 aa)) is two-partner system transport domain (TPS). Residues 54 to 74 (VALAVLVAAGVVPIWVNAQVV) traverse the membrane as a helical segment. An FHA-1 region spans residues 256-1254 (VVAGSNQVDY…GGSVAIQASG (999 aa)). The segment at 492–512 (GMTLGGGSLSNQGGRANSQGP) is disordered. Residues 500–512 (LSNQGGRANSQGP) show a composition bias toward polar residues. Positions 1345-1635 (TRRVMQTSGN…SATAVNVLSN (291 aa)) are receptor binding domain (RBD). The periplasmic FHA-1 repeat (pFR) stretch occupies residues 1790–1845 (TAGNIDLKNTQVFTNSGTVKADTTLALQGKQIDNAFGALQSGGLTSLDTTGNVDLT). The segment at 1947 to 2085 (SDTDLNSATG…TERHVYNSRE (139 aa)) is FHA-2. Disordered stretches follow at residues 2002–2031 (TSTI…ALTG), 2151–2174 (TTSQ…MSGG), and 2325–2352 (IGVQ…GSSI). The pretoxin (PT) domain stretch occupies residues 2086–2825 (THSRSGVVSG…SAGAAMASNV (740 aa)). Low complexity-rich tracts occupy residues 2151 to 2170 (TTSQ…HSGL) and 2325 to 2341 (IGVQ…MQSS). Residues 2342-2352 (EDQTIQRGSSI) show a composition bias toward polar residues. A C-terminal effector domain (CT), has tRNA nuclease activity region spans residues 2821–3122 (MASNVELYNA…NITIIKPKGN (302 aa)). The ELYN C-terminal motif signature appears at 2826–2829 (ELYN). Residues 2948–3000 (GATDRTPPSNAILSNSNSDNNSTQGSQSGTVTKTPNPEATGSLSGKPTQIPPL) form a disordered region. The segment at 2948–3122 (GATDRTPPSN…NITIIKPKGN (175 aa)) is truncated CT domain, has tRNA nuclease activity, sufficient for interaction with CdiI-2. Positions 2953–2994 (TPPSNAILSNSNSDNNSTQGSQSGTVTKTPNPEATGSLSGKP) are enriched in polar residues. Residues 2987 to 3122 (TGSLSGKPTQ…NITIIKPKGN (136 aa)) form a has tRNase activity region. Residues Glu-3012, Asp-3039, Asp-3048, and Lys-3067 contribute to the active site.

It in the N-terminal section; belongs to the CdiA toxin family. Interacts with cognate immunity protein CdiI, which blocks its tRNA nuclease activity. The truncated CT fragment (residues 2948-3122) specifically interacts with cognate CdiI which inhibits the tRNA nuclease activity. The truncated CT is more stable in vitro than the original CT fragment characterized in E.coli.

The protein resides in the membrane. The protein localises to the secreted. It is found in the target cell. It localises to the target cell cytoplasm. Its function is as follows. Toxic component of a toxin-immunity protein module, which functions as a cellular contact-dependent growth inhibition (CDI) system. CDI modules allow bacteria to communicate with and inhibit the growth of closely related neighboring bacteria in a contact-dependent fashion. The C-terminal 301 residues (the CT fragment) cleaves near the C-terminus of E.coli tRNA1B(Ala), probably preventing tRNA charging, and inhibits growth in E.coli. A truncated CT fragment (residues 2948-3122) has tRNA endonuclease activity on several B.thailandensis tRNAs as well as tRNA2(Arg) where it cleaves after A-70 and U-71. Inactive CT domain binds tRNA, probably in a 1:1 complex. Toxic activity is neutralized by coexpression of the cognate immunity protein CdiI in E.coli, but not by non-cognate immunity proteins from other strains of B.pseudomallei. May use lipopolysaccharide as its target cell receptor. Probably gains access to the cytoplasm of target cells (B.thailandensis strain E264) by using integral inner membrane protein BTH_II0599. Protein BTH_I0359 is also implicated in an unknown fashion in CDI in B.thailandensis strain E264. Expression of this cdiAIB locus in B.thailandensis confers protection against other bacteria carrying the locus; growth inhibition requires cellular contact. Functionally, the CdiA protein is thought to be exported from the cell through the central lumen of CdiB, the other half of its two-partner system (TPS). The TPS domain probably remains associated with CdiB while the FHA-1 domain forms an extended filament with the receptor-binding domain (RBD) at its extremity; in the secretion arrested state the C-terminus of the RBD domain form a hairpin-like structure as the FHA-2, PT and CT domains are periplasmic. Upon binding to a target cell outer membrane receptor (possibly a lipoprotein in this CDI) a signal is transmitted to activate secretion. The filament elongates slightly, the rest of CdiA is secreted and the FHA-2 domain becomes stably associated with the target cell's outer membrane where it facilitates entry of the toxic CT domain into the target cell periplasm. From there the toxic CT domain is cleaved and gains access to the target cell cytoplasm via an inner membrane protein (probably inner membrane protein BTH_II0599). In Burkholderia pseudomallei (strain 1026b), this protein is tRNA nuclease CdiA-2 (cdiA2).